The primary structure comprises 489 residues: Rhamnulokinase (489 aa).

13-17 (ASSGR) provides a ligand contact to ATP. C68 and C222 form a disulfide bridge. Residues G83 and 236-238 (HDT) contribute to the substrate site. D237 serves as the catalytic Proton acceptor. Position 259 (T259) interacts with ATP. N296 is a binding site for substrate. Q304 contributes to the ATP binding site. A disulfide bridge connects residues C353 and C370. An ATP-binding site is contributed by G402. Cysteines 413 and 417 form a disulfide.

It belongs to the rhamnulokinase family. Requires Mg(2+) as cofactor.

It catalyses the reaction L-rhamnulose + ATP = L-rhamnulose 1-phosphate + ADP + H(+). The protein operates within carbohydrate degradation; L-rhamnose degradation; glycerone phosphate from L-rhamnose: step 2/3. In terms of biological role, involved in the catabolism of L-rhamnose (6-deoxy-L-mannose). Catalyzes the transfer of the gamma-phosphate group from ATP to the 1-hydroxyl group of L-rhamnulose to yield L-rhamnulose 1-phosphate. In Salmonella typhi, this protein is Rhamnulokinase.